A 356-amino-acid chain; its full sequence is Mannonate dehydratase 2 (356 aa).

It belongs to the mannonate dehydratase family. Requires Fe(2+) as cofactor. It depends on Mn(2+) as a cofactor.

The enzyme catalyses D-mannonate = 2-dehydro-3-deoxy-D-gluconate + H2O. The protein operates within carbohydrate metabolism; pentose and glucuronate interconversion. Catalyzes the dehydration of D-mannonate. The protein is Mannonate dehydratase 2 of Bacillus licheniformis (strain ATCC 14580 / DSM 13 / JCM 2505 / CCUG 7422 / NBRC 12200 / NCIMB 9375 / NCTC 10341 / NRRL NRS-1264 / Gibson 46).